We begin with the raw amino-acid sequence, 245 residues long: Actin-like protein 10 (245 aa).

Belongs to the actin family.

In Homo sapiens (Human), this protein is Actin-like protein 10 (ACTL10).